Reading from the N-terminus, the 876-residue chain is Valine--tRNA ligase (876 aa).

A 'HIGH' region motif is present at residues 44-54 (PNVTGKLHLGH). The 'KMSKS' region motif lies at 520 to 524 (KMSKS). Position 523 (K523) interacts with ATP. Positions 805–876 (LEGLIDMDKE…VKARIEQLKA (72 aa)) form a coiled coil.

This sequence belongs to the class-I aminoacyl-tRNA synthetase family. ValS type 1 subfamily. As to quaternary structure, monomer.

The protein resides in the cytoplasm. The catalysed reaction is tRNA(Val) + L-valine + ATP = L-valyl-tRNA(Val) + AMP + diphosphate. Its function is as follows. Catalyzes the attachment of valine to tRNA(Val). As ValRS can inadvertently accommodate and process structurally similar amino acids such as threonine, to avoid such errors, it has a 'posttransfer' editing activity that hydrolyzes mischarged Thr-tRNA(Val) in a tRNA-dependent manner. The sequence is that of Valine--tRNA ligase from Staphylococcus aureus (strain Mu3 / ATCC 700698).